The sequence spans 316 residues: HPr kinase/phosphorylase (316 aa).

Residues His-146 and Lys-167 contribute to the active site. An ATP-binding site is contributed by 161–168 (GESGLGKS). Position 168 (Ser-168) interacts with Mg(2+). Asp-185 (proton acceptor; for phosphorylation activity. Proton donor; for dephosphorylation activity) is an active-site residue. An important for the catalytic mechanism of both phosphorylation and dephosphorylation region spans residues 209–218 (LEVRGIGLLD). Glu-210 contacts Mg(2+). The active site involves Arg-252. Positions 273–278 (QVEAGR) are important for the catalytic mechanism of dephosphorylation.

This sequence belongs to the HPrK/P family. As to quaternary structure, homohexamer. It depends on Mg(2+) as a cofactor.

The enzyme catalyses [HPr protein]-L-serine + ATP = [HPr protein]-O-phospho-L-serine + ADP + H(+). It carries out the reaction [HPr protein]-O-phospho-L-serine + phosphate + H(+) = [HPr protein]-L-serine + diphosphate. In terms of biological role, catalyzes the ATP- as well as the pyrophosphate-dependent phosphorylation of a specific serine residue in HPr, a phosphocarrier protein of the phosphoenolpyruvate-dependent sugar phosphotransferase system (PTS). HprK/P also catalyzes the pyrophosphate-producing, inorganic phosphate-dependent dephosphorylation (phosphorolysis) of seryl-phosphorylated HPr (P-Ser-HPr). This is HPr kinase/phosphorylase from Polaromonas sp. (strain JS666 / ATCC BAA-500).